The sequence spans 494 residues: Aspartyl/glutamyl-tRNA(Asn/Gln) amidotransferase subunit B (494 aa).

The protein belongs to the GatB/GatE family. GatB subfamily. In terms of assembly, heterotrimer of A, B and C subunits.

It catalyses the reaction L-glutamyl-tRNA(Gln) + L-glutamine + ATP + H2O = L-glutaminyl-tRNA(Gln) + L-glutamate + ADP + phosphate + H(+). It carries out the reaction L-aspartyl-tRNA(Asn) + L-glutamine + ATP + H2O = L-asparaginyl-tRNA(Asn) + L-glutamate + ADP + phosphate + 2 H(+). In terms of biological role, allows the formation of correctly charged Asn-tRNA(Asn) or Gln-tRNA(Gln) through the transamidation of misacylated Asp-tRNA(Asn) or Glu-tRNA(Gln) in organisms which lack either or both of asparaginyl-tRNA or glutaminyl-tRNA synthetases. The reaction takes place in the presence of glutamine and ATP through an activated phospho-Asp-tRNA(Asn) or phospho-Glu-tRNA(Gln). This chain is Aspartyl/glutamyl-tRNA(Asn/Gln) amidotransferase subunit B, found in Synechococcus sp. (strain CC9902).